Reading from the N-terminus, the 156-residue chain is Endoribonuclease YbeY (156 aa).

Residues His-122, His-126, and His-132 each coordinate Zn(2+).

Belongs to the endoribonuclease YbeY family. Requires Zn(2+) as cofactor.

It is found in the cytoplasm. Its function is as follows. Single strand-specific metallo-endoribonuclease involved in late-stage 70S ribosome quality control and in maturation of the 3' terminus of the 16S rRNA. The polypeptide is Endoribonuclease YbeY (Geobacillus thermodenitrificans (strain NG80-2)).